The primary structure comprises 213 residues: MNFKYSFIFLFFIQLAIRYNNAKITVDTICKGGKLIQMSNHYECKCPSGYALKTENTCEPIVKCDKLENINKVCGEYSICINQGNFGLEKAFVCMCTNGYMLSQNICKPTRCYNYECNAGKCILDSINPNNPVCSCDIGKILQNGKCTGTGETKCLLKCKAAEECKLTGKHYECVSKPQAPGTGSETPSNSSFMNGMSIISIIALLVIYVIVM.

A signal peptide spans 1-28 (MNFKYSFIFLFFIQLAIRYNNAKITVDT). Residues 30-59 (CKGGKLIQMSNHYECKCPSGYALKTENTCE) enclose the EGF-like 1; truncated domain. EGF-like domains lie at 60 to 108 (PIVK…NICK) and 108 to 148 (KPTR…GKCT). Intrachain disulfides connect Cys64–Cys80, Cys74–Cys94, Cys96–Cys107, Cys112–Cys122, Cys117–Cys134, and Cys136–Cys147. An EGF-like 4; truncated domain is found at 151 to 175 (GETKCLLKCKAAEECKLTGKHYECV). The GPI-anchor amidated asparagine moiety is linked to residue Asn190. Asn190 carries N-linked (GlcNAc...) asparagine glycosylation. Residues 191-213 (SSFMNGMSIISIIALLVIYVIVM) constitute a propeptide, removed in mature form.

It localises to the cell membrane. This is 24 kDa ookinete surface protein from Plasmodium berghei (strain Anka).